Reading from the N-terminus, the 103-residue chain is MTALSRLAATVEARKGADPESSWTAKLFAKGPEKCAEKFGEEAVEAIIAAVKNDRANLVYEAADVLYHLTVMLAARDVSLDEVLAELDRRAGTSGIAEKAARG.

The protein belongs to the PRA-PH family.

The protein resides in the cytoplasm. The catalysed reaction is 1-(5-phospho-beta-D-ribosyl)-ATP + H2O = 1-(5-phospho-beta-D-ribosyl)-5'-AMP + diphosphate + H(+). Its pathway is amino-acid biosynthesis; L-histidine biosynthesis; L-histidine from 5-phospho-alpha-D-ribose 1-diphosphate: step 2/9. The chain is Phosphoribosyl-ATP pyrophosphatase (hisE) from Rhodobacter capsulatus (strain ATCC BAA-309 / NBRC 16581 / SB1003).